A 343-amino-acid polypeptide reads, in one-letter code: Sodium/bile acid cotransporter 7 (343 aa).

Residues 1–10 (MGLLERLRKE) lie on the Cytoplasmic side of the membrane. The chain crosses the membrane as a helical span at residues 11 to 31 (WFIVGIILVIAAAKLEPTIGG). Over 32–37 (KGGPLK) the chain is Extracellular. Residues 38–58 (PEITITYIAVSAIFFNSGLSL) traverse the membrane as a helical segment. Topologically, residues 59-71 (KTEELTNALMHVK) are cytoplasmic. Residues 72-92 (LHLFVQLFTLVFFPTAIWVFL) traverse the membrane as a helical segment. Topologically, residues 93 to 116 (QVLSLTPINEWLLKGLQTVSCMPP) are extracellular. Residues 117-137 (PVSSAVILTKAVGGNEAAAIF) traverse the membrane as a helical segment. Residue Asn138 is a topological domain, cytoplasmic. Residues 139–159 (SAFGSFLGIVVTPLLLLLFLG) form a helical membrane-spanning segment. Topologically, residues 160–163 (SSSS) are extracellular. Residues 164-184 (VPFTSIFSQLFMTVVVPLIIG) traverse the membrane as a helical segment. At 185–201 (QIVRRYIKDWLERKKPP) the chain is on the cytoplasmic side. Residues 202-222 (FGAISSCVLLMIIYTTFCDTF) traverse the membrane as a helical segment. The Extracellular segment spans residues 223 to 234 (SNPNIDLDTFSL). Residues 235–255 (VIIVFIIFFIQLAFMLLTFLF) traverse the membrane as a helical segment. Residues 256–270 (STSKNTGFTPADTVA) are Cytoplasmic-facing. A helical transmembrane segment spans residues 271–291 (IVFCSTHKSLTLGIPMLKIVF). Residues 292 to 298 (AGYEHLS) are Extracellular-facing. The chain crosses the membrane as a helical span at residues 299 to 319 (LISVPLLIYHPAQILLGSVLV). Residues 320-343 (PTIKSWMLSRQKALKLTRQPKVPL) lie on the Cytoplasmic side of the membrane.

The protein belongs to the bile acid:sodium symporter (BASS) (TC 2.A.28) family.

It localises to the cell membrane. It is found in the endoplasmic reticulum membrane. Its subcellular location is the golgi apparatus membrane. Involved in teeth and skeletal development. Has an essential role in the biosynthesis and trafficking of glycosaminoglycans and glycoproteins to produce a proper functioning extracellular matrix. Required for extracellular matrix mineralization. Also involved in the regulation of cellular calcium homeostasis. Does not show transport activity towards bile acids or steroid sulfates. In Xenopus tropicalis (Western clawed frog), this protein is Sodium/bile acid cotransporter 7 (slc10a7).